The sequence spans 224 residues: Ribonuclease T (224 aa).

The segment covering 1–11 has biased composition (acidic residues); it reads MSEDLYEDDQD. Residues 1-20 are disordered; it reads MSEDLYEDDQDSQVSSGSRH. In terms of domain architecture, Exonuclease spans 32 to 206; it reads VVVDVETGGF…YDTEKTAELF (175 aa). Residues D35, E37, H193, and D198 each coordinate Mg(2+). H193 functions as the Proton donor/acceptor in the catalytic mechanism.

It belongs to the RNase T family. In terms of assembly, homodimer. Mg(2+) serves as cofactor.

In terms of biological role, trims short 3' overhangs of a variety of RNA species, leaving a one or two nucleotide 3' overhang. Responsible for the end-turnover of tRNA: specifically removes the terminal AMP residue from uncharged tRNA (tRNA-C-C-A). Also appears to be involved in tRNA biosynthesis. This Pseudomonas entomophila (strain L48) protein is Ribonuclease T.